Consider the following 1106-residue polypeptide: DNA polymerase delta catalytic subunit (1106 aa).

The segment at M1–A28 is disordered. The Nuclear localization signal signature appears at K4–R19. R19 is subject to Omega-N-methylarginine. Residue K573 forms a Glycyl lysine isopeptide (Lys-Gly) (interchain with G-Cter in SUMO2) linkage. The Zn(2+) site is built by C1011, C1014, C1025, and C1028. Residues C1011 to C1028 form a CysA-type zinc finger. [4Fe-4S] cluster is bound by residues C1057, C1060, C1070, and C1075. The CysB motif signature appears at C1057–C1075.

Belongs to the DNA polymerase type-B family. Component of the tetrameric DNA polymerase delta complex (Pol-delta4), which consists of POLD1/p125, POLD2/p50, POLD3/p66/p68 and POLD4/p12, with POLD1 bearing both DNA polymerase and 3' to 5' proofreading exonuclease activities. Within Pol-delta4, directly interacts with POLD2 and POLD4. Following genotoxic stress by DNA-damaging agents, such as ultraviolet light and methyl methanesulfonate, or by replication stress induced by treatment with hydroxyurea or aphidicolin, Pol-delta4 is converted into a trimeric form of the complex (Pol-delta3) by POLD4 degradation. Pol-delta3 is the major form at S phase replication sites and DNA damage sites. POLD1 displays different catalytic properties depending upon the complex it is found in. It exhibits higher proofreading activity and fidelity than Pol-delta4, making it particularly well suited to respond to DNA damage. Directly interacts with PCNA, as do POLD3 and POLD4; this interaction stimulates Pol-delta4 polymerase activity. As POLD2 and POLD4, directly interacts with WRNIP1; this interaction stimulates DNA polymerase delta-mediated DNA synthesis, independently of the presence of PCNA. This stimulation may be due predominantly to an increase of initiation frequency and also to increased processivity. Also observed as a dimeric complex with POLD2 (Pol-delta2). Pol-delta2 is relatively insensitive to the PCNA stimulation (2-5-fold) compared to Pol-delta4 that is stimulated by over 50-fold. Interacts with POLDIP2; this interaction is indirect and most probably mediated through POLD2-binding. Interacts with CIAO1. Interacts with POLDIP2. Interacts with RFC1. The cofactor is [4Fe-4S] cluster.

It is found in the nucleus. The enzyme catalyses DNA(n) + a 2'-deoxyribonucleoside 5'-triphosphate = DNA(n+1) + diphosphate. Its activity is regulated as follows. Regulated by alteration of quaternary structure. Exhibits burst rates of DNA synthesis are about 5 times faster in the presence of POLD4 (Pol-delta4 complex) than in its absence (Pol-delta3 complex), while the affinity of the enzyme for its DNA and dNTP substrates appears unchanged. The Pol-delta3 complex is more likely to proofread DNA synthesis because it cleaves single-stranded DNA twice as fast and transfers mismatched DNA from the polymerase to the exonuclease sites 9 times faster compared to the Pol-delta3 complex. Pol-delta3 also extends mismatched primers 3 times more slowly in the absence of POLD4. The conversion of Pol-delta4 into Pol-delta3 is induced by genotoxic stress or by replication stress leading POLD4 degradation. Stimulated in the presence of PCNA. This stimulation is further increased in the presence of KCTD13/PDIP1, most probably via direct interaction between KCTD13 and POLD2. As the catalytic component of the trimeric (Pol-delta3 complex) and tetrameric DNA polymerase delta complexes (Pol-delta4 complex), plays a crucial role in high fidelity genome replication, including in lagging strand synthesis, and repair. Exhibits both DNA polymerase and 3'- to 5'-exonuclease activities. Requires the presence of accessory proteins POLD2, POLD3 and POLD4 for full activity. Depending upon the absence (Pol-delta3) or the presence of POLD4 (Pol-delta4), displays differences in catalytic activity. Most notably, expresses higher proofreading activity in the context of Pol-delta3 compared with that of Pol-delta4. Although both Pol-delta3 and Pol-delta4 process Okazaki fragments in vitro, Pol-delta3 may be better suited to fulfill this task, exhibiting near-absence of strand displacement activity compared to Pol-delta4 and stalling on encounter with the 5'-blocking oligonucleotides. Pol-delta3 idling process may avoid the formation of a gap, while maintaining a nick that can be readily ligated. Along with DNA polymerase kappa, DNA polymerase delta carries out approximately half of nucleotide excision repair (NER) synthesis following UV irradiation. Under conditions of DNA replication stress, in the presence of POLD3 and POLD4, may catalyze the repair of broken replication forks through break-induced replication (BIR). Involved in the translesion synthesis (TLS) of templates carrying O6-methylguanine, 8oxoG or abasic sites. In Bos taurus (Bovine), this protein is DNA polymerase delta catalytic subunit (POLD1).